Reading from the N-terminus, the 125-residue chain is Prefoldin subunit beta (125 aa).

This sequence belongs to the prefoldin subunit beta family. Heterohexamer of two alpha and four beta subunits.

Its subcellular location is the cytoplasm. Functionally, molecular chaperone capable of stabilizing a range of proteins. Seems to fulfill an ATP-independent, HSP70-like function in archaeal de novo protein folding. This is Prefoldin subunit beta from Pyrobaculum calidifontis (strain DSM 21063 / JCM 11548 / VA1).